Consider the following 259-residue polypeptide: (3R)-3-hydroxyacyl-CoA dehydrogenase (259 aa).

NAD(+) is bound by residues 13–21 and 40–41; these read LVTGAGSGI and DL. Residue Ser-58 is modified to Phosphoserine. Lys-66 is subject to N6-acetyllysine. Residue 72 to 74 participates in NAD(+) binding; sequence ADV. Ser-154 is a substrate binding site. The residue at position 158 (Lys-158) is an N6-succinyllysine. The Proton acceptor role is filled by Tyr-167. NAD(+)-binding positions include 167–171 and 200–202; these read YASSK and IAT. Lys-171 is subject to N6-succinyllysine.

It belongs to the short-chain dehydrogenases/reductases (SDR) family. In terms of assembly, heterotetramer with CBR4; contains two molecules of HSD17B8 and CBR4. As to expression, kidney, liver, testis, ovary and spleen. Oviduct, uterus, mammary gland, vagina, prostate, clitoral gland and moderately heart, dorsal skin, brain and lung.

The protein localises to the mitochondrion matrix. It carries out the reaction a (3R)-3-hydroxyacyl-CoA + NAD(+) = a 3-oxoacyl-CoA + NADH + H(+). The catalysed reaction is 17beta-estradiol + NAD(+) = estrone + NADH + H(+). It catalyses the reaction testosterone + NAD(+) = androst-4-ene-3,17-dione + NADH + H(+). The enzyme catalyses 17beta-hydroxy-5alpha-androstan-3-one + NAD(+) = 5alpha-androstan-3,17-dione + NADH + H(+). It functions in the pathway lipid metabolism; fatty acid biosynthesis. The protein operates within steroid biosynthesis; estrogen biosynthesis. Its pathway is lipid metabolism; mitochondrial fatty acid beta-oxidation. In terms of biological role, required for the solubility and assembly of the heterotetramer 3-ketoacyl-[acyl carrier protein] (ACP) reductase functional complex (KAR or KAR1) that forms part of the mitochondrial fatty acid synthase (mtFAS). Alpha-subunit of the KAR complex, acts as scaffold protein, required for the stability of carbonyl reductase type-4 (CBR4, beta-subunit of the KAR complex) and for its 3-ketoacyl-ACP reductase activity, thereby participating in mitochondrial fatty acid biosynthesis. Catalyzes the NAD-dependent conversion of (3R)-3-hydroxyacyl-CoA into 3-ketoacyl-CoA (3-oxoacyl-CoA) with no chain length preference, this enzymatic activity is not needed for the KAR function. Prefers (3R)-3-hydroxyacyl-CoA over (3S)-3-hydroxyacyl-CoA and displays enzymatic activity only in the presence of NAD(+)(H). Cooperates with enoyl-CoA hydratase 1 in mitochondria, together they constitute an alternative route to the auxiliary enzyme pathways for the breakdown of Z-PUFA (cis polyunsaturated fatty acid) enoyl-esters. NAD-dependent 17-beta-hydroxysteroid dehydrogenase with highest activity towards estradiol. It efficiently catalyzes the oxidation of estradiol (E2), testosterone, and dihydrotestosterone. Primarily an oxidative enzyme, it can switch to a reductive mode determined in the appropriate physiologic milieu and catalyze the reduction of estrone (E1) to form biologically active estradiol (E2). In Mus musculus (Mouse), this protein is (3R)-3-hydroxyacyl-CoA dehydrogenase (Hsd17b8).